Reading from the N-terminus, the 446-residue chain is Sensor-type histidine kinase PrrB (446 aa).

Transmembrane regions (helical) follow at residues 19 to 39 (VVATAIGAAIPVLIVGTVVWV) and 151 to 171 (LLICTFAIGAAAVFAWLLAAF). In terms of domain architecture, HAMP spans 172 to 222 (AVRPFKQLAEQTRSIDAGDEAPRVEVHGASEAIEIAEAMRGMLQRIWNEQN). Residues 237–446 (VSSHELRTPL…RLVLRLPGPS (210 aa)) enclose the Histidine kinase domain. Position 240 is a phosphohistidine; by autocatalysis (His240).

Autophosphorylated.

The protein localises to the cell membrane. The catalysed reaction is ATP + protein L-histidine = ADP + protein N-phospho-L-histidine.. Its function is as follows. Member of the two-component regulatory system PrrB/PrrA that is involved specifically in early intracellular multiplication of Mycobacterium and is essential for its viability. Functions as a sensor protein kinase which is autophosphorylated at a histidine residue and transfers its phosphate group to the conserved aspartic acid residue in the regulatory domain of PrrA. In turn, PrrA binds to the upstream promoter regions of target genes including itself to positively regulate their expression. The protein is Sensor-type histidine kinase PrrB (prrB) of Mycobacterium bovis (strain ATCC BAA-935 / AF2122/97).